A 525-amino-acid polypeptide reads, in one-letter code: Chromosomal replication initiator protein DnaA (525 aa).

A domain I, interacts with DnaA modulators region spans residues 1 to 71; sequence MNDFWQHCSA…ADLAREFWNT (71 aa). Residues 71 to 188 form a domain II region; sequence TPIEVQFVLD…AEADSMYERS (118 aa). The tract at residues 160–181 is disordered; sequence AAAGRRTWRPGPGAAPANGAEA. The span at 169–181 shows a compositional bias: low complexity; it reads PGPGAAPANGAEA. Positions 189-405 are domain III, AAA+ region; the sequence is KLNPVLTFDN…GALRKILAYS (217 aa). The ATP site is built by Gly233, Gly235, Lys236, and Thr237. The interval 406 to 525 is domain IV, binds dsDNA; the sequence is KFHGREISIE…LHVLEQTLKG (120 aa).

It belongs to the DnaA family. As to quaternary structure, oligomerizes as a right-handed, spiral filament on DNA at oriC.

The protein localises to the cytoplasm. Functionally, plays an essential role in the initiation and regulation of chromosomal replication. ATP-DnaA binds to the origin of replication (oriC) to initiate formation of the DNA replication initiation complex once per cell cycle. Binds the DnaA box (a 9 base pair repeat at the origin) and separates the double-stranded (ds)DNA. Forms a right-handed helical filament on oriC DNA; dsDNA binds to the exterior of the filament while single-stranded (ss)DNA is stabiized in the filament's interior. The ATP-DnaA-oriC complex binds and stabilizes one strand of the AT-rich DNA unwinding element (DUE), permitting loading of DNA polymerase. After initiation quickly degrades to an ADP-DnaA complex that is not apt for DNA replication. Binds acidic phospholipids. The polypeptide is Chromosomal replication initiator protein DnaA (Burkholderia vietnamiensis (strain G4 / LMG 22486) (Burkholderia cepacia (strain R1808))).